Consider the following 767-residue polypeptide: MVGQRAQHSPVSLLLLIHLCLLHLRASGQPHPTPEAPVEEVVSVQGVRGGSVELACGSGPAPLLVLWSFTPLGSLVPRPVAVTDGAMSKVEAIASALGVVSLRNSSLVLGELHEGARGHFLCQVLHVAGGQLHAAYSHLTLAVLVPVSKPQVRLSNPSPVEGASVVATCAVREGTEPVTFAWQHRAPRGLGEALVGVTEPLFQLDPVNRTHLGWYMCSASNSVNRLSSDGAFLDVIYGPDKPVITMEPLGLTEEGFWASEREEVTLSCLAASNPPSHYVWLRDHTQVHTGPTYVIARAGRVHTGLYTCLARNSYLDTRTQTTVQLTIYYPPEGQPSCAVHPSPEAVTLLCAWPGGLPPAQLQWEGPQGPGPTAPSNVTWSHAAAQLPSGSVFTCTGQHPALAPPALCTVMLWEPLGRPTCWSTATMGDQFIMLSCEWPGGEPPATLGWLDEQQQPLGGSSSSMAVHLLQAQEDLAGREFTCRGTHLLRTPDPHCHLQLEAPQLDVAEPRVSVLEGGEAWLECSLRGGTPPAQLLWLGPQQQKVDPGTSGFMLHPEGAQLRLGIYDADPAHHRGTYQCVARNAVGNSSQSVLLEVLRYPAPPNVTISRLTYGRHRREVQLQWAILGPGNLTGFLVQRKASALGPGAGAWETAASDIEPESRGRRLGGLDPGVLYAFRILALNHHTAGHPSEVKIPADPPFSAYPAVLGAAGTGMVVATVASLLVFQYAARHPETFPRLETPTTTPGLDPAQETTDSPVNVTITVTATP.

Residues 1–28 (MVGQRAQHSPVSLLLLIHLCLLHLRASG) form the signal peptide. 3 consecutive Ig-like domains span residues 34–140 (PEAP…SHLT), 150–234 (PQVR…AFLD), and 242–324 (PVIT…TTVQ). Cystine bridges form between Cys56–Cys122, Cys169–Cys217, and Cys268–Cys308. N-linked (GlcNAc...) asparagine glycosylation is present at Asn376. 2 Ig-like domains span residues 399–499 (PALA…LQLE) and 501–593 (PQLD…VLLE). 2 disulfide bridges follow: Cys435–Cys481 and Cys522–Cys577. Residues 599 to 699 (APPNVTISRL…EVKIPADPPF (101 aa)) form the Fibronectin type-III domain. Residues Asn602 and Asn628 are each glycosylated (N-linked (GlcNAc...) asparagine). The chain crosses the membrane as a helical span at residues 704 to 724 (AVLGAAGTGMVVATVASLLVF). The tract at residues 735-754 (PRLETPTTTPGLDPAQETTD) is disordered. Residues 739-754 (TPTTTPGLDPAQETTD) are compositionally biased toward polar residues.

The protein resides in the membrane. The polypeptide is V-set and immunoglobulin domain-containing protein 10-like 2 (Homo sapiens (Human)).